A 296-amino-acid chain; its full sequence is Cytidine deaminase (296 aa).

CMP/dCMP-type deaminase domains are found at residues 47–167 (TESE…FGPK) and 186–296 (DSSD…VDPI). 88 to 90 (NLE) provides a ligand contact to substrate. Residue His101 participates in Zn(2+) binding. The active-site Proton donor is Glu103. Zn(2+) is bound by residues Cys128 and Cys131.

It belongs to the cytidine and deoxycytidylate deaminase family. Homodimer. The cofactor is Zn(2+).

The enzyme catalyses cytidine + H2O + H(+) = uridine + NH4(+). It catalyses the reaction 2'-deoxycytidine + H2O + H(+) = 2'-deoxyuridine + NH4(+). This enzyme scavenges exogenous and endogenous cytidine and 2'-deoxycytidine for UMP synthesis. In Shewanella oneidensis (strain ATCC 700550 / JCM 31522 / CIP 106686 / LMG 19005 / NCIMB 14063 / MR-1), this protein is Cytidine deaminase.